Consider the following 212-residue polypeptide: Nascent polypeptide-associated complex subunit alpha (212 aa).

2 disordered regions span residues 1 to 54 and 123 to 177; these read MSNP…SRNE and QLAA…EDKD. The span at 22–38 shows a compositional bias: acidic residues; sequence AEDEGSDSSDSEAEGEE. Positions 51–116 constitute an NAC-A/B domain; it reads SRNEKKARKS…AKIEDLNSQA (66 aa). The span at 128-157 shows a compositional bias: basic and acidic residues; the sequence is ESHDHAGHDHSGHDHSHDHGKGKAVDTEEK. Over residues 158–169 the composition is skewed to acidic residues; that stretch reads KEEEEDDTEEVD. The 40-residue stretch at 173-212 folds into the UBA domain; it reads LEDKDIELVMTQASVSRNKAVKALKENDNDIVNSIMALSI.

This sequence belongs to the NAC-alpha family. As to quaternary structure, part of the nascent polypeptide-associated complex (NAC), consisting of EGD2 and EGD1. NAC associates with ribosomes via EGD1.

The protein resides in the cytoplasm. Its subcellular location is the nucleus. Functionally, component of the nascent polypeptide-associated complex (NAC), a dynamic component of the ribosomal exit tunnel, protecting the emerging polypeptides from interaction with other cytoplasmic proteins to ensure appropriate nascent protein targeting. The NAC complex also promotes mitochondrial protein import by enhancing productive ribosome interactions with the outer mitochondrial membrane and blocks the inappropriate interaction of ribosomes translating non-secretory nascent polypeptides with translocation sites in the membrane of the endoplasmic reticulum. EGD2 may also be involved in transcription regulation. The chain is Nascent polypeptide-associated complex subunit alpha (egd2) from Botryotinia fuckeliana (strain B05.10) (Noble rot fungus).